A 331-amino-acid polypeptide reads, in one-letter code: Ribosomal RNA small subunit methyltransferase H (331 aa).

Residues G56–H58, D76, F100, D122, and Q129 each bind S-adenosyl-L-methionine.

Belongs to the methyltransferase superfamily. RsmH family.

The protein localises to the cytoplasm. The enzyme catalyses cytidine(1402) in 16S rRNA + S-adenosyl-L-methionine = N(4)-methylcytidine(1402) in 16S rRNA + S-adenosyl-L-homocysteine + H(+). Its function is as follows. Specifically methylates the N4 position of cytidine in position 1402 (C1402) of 16S rRNA. The polypeptide is Ribosomal RNA small subunit methyltransferase H (Chromohalobacter salexigens (strain ATCC BAA-138 / DSM 3043 / CIP 106854 / NCIMB 13768 / 1H11)).